The following is a 64-amino-acid chain: Large ribosomal subunit protein uL29 (64 aa).

Belongs to the universal ribosomal protein uL29 family.

This chain is Large ribosomal subunit protein uL29, found in Levilactobacillus brevis (strain ATCC 367 / BCRC 12310 / CIP 105137 / JCM 1170 / LMG 11437 / NCIMB 947 / NCTC 947) (Lactobacillus brevis).